The sequence spans 174 residues: MHCPFCQHNDTRVIDSRVSEDGTTIRRRRECEACGERFSTLETIELKLPTVVKSDGGREAFDARKLRTSFDRALQKRPVSEEQIEAAVRAVVHQLRMSGEREVGSLRVGEYVMVELRKLDHVGYVRFASVYRSFQDVADFREEIEKLERELPVGSEQLPLLEAALERAGKPGKR.

A zinc finger lies at cysteine 3–cysteine 34. An ATP-cone domain is found at proline 49 to aspartate 139.

The protein belongs to the NrdR family. Zn(2+) is required as a cofactor.

Functionally, negatively regulates transcription of bacterial ribonucleotide reductase nrd genes and operons by binding to NrdR-boxes. This is Transcriptional repressor NrdR from Xanthomonas campestris pv. campestris (strain 8004).